We begin with the raw amino-acid sequence, 470 residues long: Glutamate--tRNA ligase (470 aa).

Positions 9–19 (PSPTGFLHVGG) match the 'HIGH' region motif. A 'KMSKS' region motif is present at residues 236 to 240 (KLSKR). Residue K239 coordinates ATP.

Belongs to the class-I aminoacyl-tRNA synthetase family. Glutamate--tRNA ligase type 1 subfamily. In terms of assembly, monomer.

It is found in the cytoplasm. It carries out the reaction tRNA(Glu) + L-glutamate + ATP = L-glutamyl-tRNA(Glu) + AMP + diphosphate. Its function is as follows. Catalyzes the attachment of glutamate to tRNA(Glu) in a two-step reaction: glutamate is first activated by ATP to form Glu-AMP and then transferred to the acceptor end of tRNA(Glu). The sequence is that of Glutamate--tRNA ligase from Psychromonas ingrahamii (strain DSM 17664 / CCUG 51855 / 37).